We begin with the raw amino-acid sequence, 310 residues long: Olfactory receptor 5P80 (310 aa).

The Extracellular portion of the chain corresponds to 1 to 25 (MEPGNYTVVTEVILLGFTEDAIIRA). N-linked (GlcNAc...) asparagine glycosylation is present at N5. Residues 26-46 (ILFIVFLIIYSVTLMGNASII) form a helical membrane-spanning segment. Residues 47-54 (MLIRRSPQ) lie on the Cytoplasmic side of the membrane. A helical membrane pass occupies residues 55 to 75 (LHTPMYLLLSHLAFVDIGYSS). Over 76-99 (SVTPIMLKGFLRKETFILVSGCVA) the chain is Extracellular. Residues C97 and C189 are joined by a disulfide bond. The chain crosses the membrane as a helical span at residues 100-120 (QLCSVVTFGSTECFLLAAMAY). Topologically, residues 121 to 133 (DRYVAICSPLLYA) are cytoplasmic. The helical transmembrane segment at 134–154 (TQMSSTVCILLVGASYLGGCV) threads the bilayer. The Extracellular portion of the chain corresponds to 155-196 (NAWTFTGCLLNLSFCRPNKVNHFFCDYSPLLKISCSHDFSSE). The N-linked (GlcNAc...) asparagine glycan is linked to N165. A helical membrane pass occupies residues 197 to 217 (VIPAISSGSIIVVTVFIIALS). Residues 218-237 (YVYILVSILKMRSTEGRQKA) lie on the Cytoplasmic side of the membrane. The chain crosses the membrane as a helical span at residues 238 to 258 (FSTCTSHLTAVTLFYGTITFI). Topologically, residues 259–271 (YVMPKSSYSTDQN) are extracellular. Residues 272 to 292 (KVVSVFYTVVIPMLNPIIYSL) form a helical membrane-spanning segment. Topologically, residues 293–310 (RNKDVKEAMKKLMANTHH) are cytoplasmic.

Belongs to the G-protein coupled receptor 1 family.

The protein localises to the cell membrane. Its function is as follows. Potential odorant receptor. The sequence is that of Olfactory receptor 5P80 from Mus musculus (Mouse).